We begin with the raw amino-acid sequence, 367 residues long: RNA-binding protein 48 (367 aa).

In terms of domain architecture, RRM spans 46 to 124 (QYLLIQGVPA…GLLHVCYAPE (79 aa)). Positions 217–228 (PVDRASDSSKDG) are enriched in basic and acidic residues. Disordered regions lie at residues 217–243 (PVDR…HNGS), 277–303 (RTTQ…TNPS), and 339–367 (EVIS…RRRI). The span at 347–356 (PPEDKPEDVN) shows a compositional bias: basic and acidic residues.

This sequence belongs to the RBM48 family. As to quaternary structure, component of the minor spliceosome. Within this complex, interacts with ARMC7 and PRPF8/PRP8.

Its function is as follows. As a component of the minor spliceosome, involved in the splicing of U12-type introns in pre-mRNAs. This is RNA-binding protein 48 (RBM48) from Pongo abelii (Sumatran orangutan).